Here is a 555-residue protein sequence, read N- to C-terminus: Potassium-transporting ATPase potassium-binding subunit (555 aa).

Transmembrane regions (helical) follow at residues 2–22 (IWVAVVITMLLFILVAKPTGI), 60–80 (QYALSLVLLNGFMIVVVYFIF), 130–150 (IGITFLMFAAPATTLALVMAF), 173–193 (VFLPIAFMAALVFVALGVPQT), 246–266 (MSNILQMMLMMLLPTALPFTY), 278–298 (ILFVSLFMVFLLGFITITTSE), 374–394 (AGFVNIIMYAIIAVFISGLMV), 412–432 (LIAVTILFHPLLILGFSALAL), 483–503 (LVMFLGRYFSLITMLAVAASL), and 525–545 (GIFIGTIVIVGALTFFPMLVL).

The protein belongs to the KdpA family. As to quaternary structure, the system is composed of three essential subunits: KdpA, KdpB and KdpC.

It localises to the cell membrane. Functionally, part of the high-affinity ATP-driven potassium transport (or Kdp) system, which catalyzes the hydrolysis of ATP coupled with the electrogenic transport of potassium into the cytoplasm. This subunit binds the extracellular potassium ions and delivers the ions to the membrane domain of KdpB through an intramembrane tunnel. In Bacillus cereus (strain Q1), this protein is Potassium-transporting ATPase potassium-binding subunit.